The primary structure comprises 503 residues: Aspartyl/glutamyl-tRNA(Asn/Gln) amidotransferase subunit B (503 aa).

Belongs to the GatB/GatE family. GatB subfamily. Heterotrimer of A, B and C subunits.

It catalyses the reaction L-glutamyl-tRNA(Gln) + L-glutamine + ATP + H2O = L-glutaminyl-tRNA(Gln) + L-glutamate + ADP + phosphate + H(+). The catalysed reaction is L-aspartyl-tRNA(Asn) + L-glutamine + ATP + H2O = L-asparaginyl-tRNA(Asn) + L-glutamate + ADP + phosphate + 2 H(+). Allows the formation of correctly charged Asn-tRNA(Asn) or Gln-tRNA(Gln) through the transamidation of misacylated Asp-tRNA(Asn) or Glu-tRNA(Gln) in organisms which lack either or both of asparaginyl-tRNA or glutaminyl-tRNA synthetases. The reaction takes place in the presence of glutamine and ATP through an activated phospho-Asp-tRNA(Asn) or phospho-Glu-tRNA(Gln). The chain is Aspartyl/glutamyl-tRNA(Asn/Gln) amidotransferase subunit B from Rhodococcus erythropolis (strain PR4 / NBRC 100887).